The following is a 698-amino-acid chain: Protein arginine N-methyltransferase 7 (698 aa).

SAM-dependent MTase PRMT-type domains follow at residues 14–357 and 366–698; these read QNTW…YSLW and EKPA…EKSE.

The protein belongs to the class I-like SAM-binding methyltransferase superfamily. Protein arginine N-methyltransferase family. PRMT7 subfamily.

In terms of biological role, essential arginine methyltransferase that can both catalyze the formation of omega-N monomethylarginine (MMA) and symmetrical dimethylarginine (sDMA). Specifically mediates the symmetrical dimethylation of arginine residues in the small nuclear ribonucleoproteins SmD1 and SmD3. This chain is Protein arginine N-methyltransferase 7 (Art7), found in Drosophila mojavensis (Fruit fly).